Here is a 632-residue protein sequence, read N- to C-terminus: uncharacterized protein (632 aa).

The protein belongs to the MG032/MG096/MG288 family.

This is an uncharacterized protein from Mycoplasma pneumoniae (strain ATCC 29342 / M129 / Subtype 1) (Mycoplasmoides pneumoniae).